We begin with the raw amino-acid sequence, 151 residues long: MGTNLPTEVGQILSAPTSIDYNYPTTGVWDASYDICLDSTPKTTGVNQQEIMIWFNHQGSIQPVGSPVGNTTIEGKNFVVWDGSNGMNNAMAYVATEPIEVWSFDVMSFVDHTATMEPITDSWYLTSIRAGLEPWSDGVGLGVDSFSAKVN.

Catalysis depends on residues Glu50 and Glu133.

The protein belongs to the glycosyl hydrolase 12 (cellulase H) family.

Its function is as follows. Probable cellulase. Can hydrolyze barley beta-glucan in vitro. Could be important for the survival of M.tuberculosis in the environment, perhaps in amoebal hosts. In Mycobacterium tuberculosis (strain ATCC 25618 / H37Rv), this protein is Probable cellulase Cel12b.